The chain runs to 47 residues: Large ribosomal subunit protein uL14c (47 aa).

It belongs to the universal ribosomal protein uL14 family. In terms of assembly, part of the 50S ribosomal subunit.

The protein resides in the plastid. It localises to the chloroplast. Functionally, binds to 23S rRNA. This Vigna unguiculata (Cowpea) protein is Large ribosomal subunit protein uL14c (rpl14).